A 348-amino-acid chain; its full sequence is RNA 3'-terminal phosphate cyclase (348 aa).

Residues Gln-107 and 290-294 (HLADQ) each bind ATP. His-316 (tele-AMP-histidine intermediate) is an active-site residue.

It belongs to the RNA 3'-terminal cyclase family. Type 1 subfamily.

The protein localises to the cytoplasm. The catalysed reaction is a 3'-end 3'-phospho-ribonucleotide-RNA + ATP = a 3'-end 2',3'-cyclophospho-ribonucleotide-RNA + AMP + diphosphate. In terms of biological role, catalyzes the conversion of 3'-phosphate to a 2',3'-cyclic phosphodiester at the end of RNA. The mechanism of action of the enzyme occurs in 3 steps: (A) adenylation of the enzyme by ATP; (B) transfer of adenylate to an RNA-N3'P to produce RNA-N3'PP5'A; (C) and attack of the adjacent 2'-hydroxyl on the 3'-phosphorus in the diester linkage to produce the cyclic end product. The biological role of this enzyme is unknown but it is likely to function in some aspects of cellular RNA processing. In Trichormus variabilis (strain ATCC 29413 / PCC 7937) (Anabaena variabilis), this protein is RNA 3'-terminal phosphate cyclase.